The following is a 1064-amino-acid chain: Lysine-specific demethylase 4A (1064 aa).

Position 2 is an N-acetylalanine (Ala-2). The JmjN domain maps to 14–56 (IMTFYPTMEEFRNFSRYIAYIESQGAHRAGLAKVVPPKEWKPR). Residue Tyr-132 participates in 2-oxoglutarate binding. The JmjC domain occupies 142–308 (EKHVDEWNIG…YGKQAVLCSC (167 aa)). Fe cation contacts are provided by His-188 and Glu-190. Positions 198 and 206 each coordinate 2-oxoglutarate. Zn(2+)-binding residues include Cys-234 and His-240. Residue Lys-241 participates in 2-oxoglutarate binding. His-276 is a binding site for Fe cation. Positions 306 and 308 each coordinate Zn(2+). The interval 358–384 (ELPPRAGNEEECPEEDMEGVEDGEEGD) is disordered. Positions 366–382 (EEECPEEDMEGVEDGEE) are enriched in acidic residues. Residue Lys-471 forms a (Microbial infection) Glycyl lysine isopeptide (Lys-Gly) (interchain with G-Cter in SUMO) linkage. Disordered stretches follow at residues 501–537 (FSGSKKKSSSSLGSGSSRDSISSDSETSEPLSCRAQG) and 616–641 (SDDETSEQLTPEEEAEETEAWAKPLS). Residues 509–532 (SSSLGSGSSRDSISSDSETSEPLS) are compositionally biased toward low complexity. Ser-523 bears the Phosphoserine mark. Residues 597 to 638 (RQPLSKLPRHHPLVLQECVSDDETSEQLTPEEEAEETEAWAK) form an interaction with NCOR1 region. Positions 616 to 634 (SDDETSEQLTPEEEAEETE) are enriched in acidic residues. The PHD-type 1 zinc-finger motif lies at 709–767 (MCFTSTGCSTDINLSTPYLEEDGTSILVSCKKCSVRVHASCYGVPPAKASEDWMCSRCS). The segment at 772–805 (EEDCCLCSLRGGALQRANDDRWVHVSCAVAILEA) adopts a C2HC pre-PHD-type zinc-finger fold. The PHD-type 2 zinc-finger motif lies at 828–885 (LKCIFCKKRRKRTAGCCVQCSHGRCPTAFHVSCAQAAGVMMQPDDWPFVVFITCFRHK). Tudor domains follow at residues 897–954 (QSIT…CLQF) and 955–1011 (GPPA…EELP).

The protein belongs to the JHDM3 histone demethylase family. Interacts with histone deacetylase proteins HDAC1, HDAC2 and HDAC3. Interacts with RB and NCOR1. Interacts with VRK1. Interacts with FBXO22; this interaction promotes KDM4A ubiquitination. In terms of assembly, (Microbial infection) Interacts with HTLV-1 Tax protein. It depends on Fe(2+) as a cofactor. (Microbial infection) SUMOylated by human herpesvirus 8 E3 SUMO-protein ligase K-bZIP/K8 at Lys-471; thereby modulating the chromatin binding and histone demethylase activity of KDM4A. Post-translationally, ubiquitinated by RNF8 and RNF168 following DNA damage, leading to its degradation. Degradation promotes accessibility of H4K20me2 mark for DNA repair protein TP53BP1, which is then recruited. Also ubiquitinated by the SCF(FBXO22) complex; leading to proteasomal degradation. In terms of tissue distribution, ubiquitous.

It is found in the nucleus. The catalysed reaction is N(6),N(6),N(6)-trimethyl-L-lysyl(9)-[histone H3] + 2 2-oxoglutarate + 2 O2 = N(6)-methyl-L-lysyl(9)-[histone H3] + 2 formaldehyde + 2 succinate + 2 CO2. It carries out the reaction N(6),N(6),N(6)-trimethyl-L-lysyl(36)-[histone H3] + 2 2-oxoglutarate + 2 O2 = N(6)-methyl-L-lysyl(36)-[histone H3] + 2 formaldehyde + 2 succinate + 2 CO2. Its activity is regulated as follows. Several specific inhibitors are being developed and tested. In terms of biological role, histone demethylase that specifically demethylates 'Lys-9' and 'Lys-36' residues of histone H3, thereby playing a central role in histone code. Does not demethylate histone H3 'Lys-4', H3 'Lys-27' nor H4 'Lys-20'. Demethylates trimethylated H3 'Lys-9' and H3 'Lys-36' residue, while it has no activity on mono- and dimethylated residues. Demethylation of Lys residue generates formaldehyde and succinate. Participates in transcriptional repression of ASCL2 and E2F-responsive promoters via the recruitment of histone deacetylases and NCOR1, respectively. Its function is as follows. Crucial for muscle differentiation, promotes transcriptional activation of the Myog gene by directing the removal of repressive chromatin marks at its promoter. Lacks the N-terminal demethylase domain. The sequence is that of Lysine-specific demethylase 4A (KDM4A) from Homo sapiens (Human).